The following is a 309-amino-acid chain: GalNAc(5)-diNAcBac-PP-undecaprenol beta-1,3-glucosyltransferase (309 aa).

A helical transmembrane segment spans residues 273–291 (SLSIKINAPALILLILSII).

Belongs to the glycosyltransferase 2 family.

The protein resides in the membrane. The catalysed reaction is [alpha-D-GalNAc-(1-&gt;4)]4-alpha-D-GalNAc-(1-&gt;3)-alpha-D-diNAcBac-tri-trans,hepta-cis-undecaprenyl diphosphate + UDP-alpha-D-glucose = [alpha-D-GalNAc-(1-&gt;4)]2-[beta-D-Glc-(1-&gt;3)]-[alpha-D-GalNAc-(1-&gt;4)]2-alpha-D-GalNAc-(1-&gt;3)-alpha-D-diNAcBac-tri-trans,hepta-cis-undecaprenyl diphosphate + UDP + H(+). It functions in the pathway protein modification; protein glycosylation. Functionally, glucosyltransferase that adds he final branching glucose to complete the final heptasaccharide structure in the N-linked protein glycosylation pathway. The chain is GalNAc(5)-diNAcBac-PP-undecaprenol beta-1,3-glucosyltransferase (pglI) from Campylobacter jejuni subsp. jejuni serotype O:2 (strain ATCC 700819 / NCTC 11168).